The sequence spans 596 residues: MASVVCNSSSSTTTTTLKTPFTSLGSTPKPSQLFLHGKRNKTFKVSCKVINNNGNQDETNSVDRRNVLLGLGGLYGVANAIPLAASATPIPSPDLKTCGRATISDGPLVPYSCCPPPMPTNFDTIPYYKFPSMTKLRIRTPAHAVDEEYIAKYNLAISRMRDLDKTEPLNPLGFKQQANIHCAYCNGAYIIGGKELQVHNSWLFFPFHRWYLYFYERILGKLIDDPTFALPYWNWDHPKGMRLPPMFDREGSSLYDERRNQQVRNGTVLDLGSFGDKVETTQLQLMSNNLTLMYRQMVTNAPCPLLFFGAPYVLGNNVEAPGTIETIPHIPVHIWAGTVRGSKFPNGDVSYGEDMGNFYSAGLDPVFYCHHGNVDRMWNEWKAIGGKRRDISEKDWLNSEFFFYDEHKNPYRVKVRDCLDTKKMGYDYAPMPTPWRNFKPKSKASVGKVNTSTLPPANEVFPLAKMDKTISFAINRPASSRTQQEKNEQEEMLTFNNIRYDNRGYIRFDVFLNVDNNVNANELDKAEFAGSYTSLPHVHRAGENDHIAKVNFQLAITELLEDIGLEDEDTIAVTLVPKKGGEGISIENVEIKLVDC.

The segment at 1-23 (MASVVCNSSSSTTTTTLKTPFTS) is disordered. A chloroplast-targeting transit peptide spans 1 to 87 (MASVVCNSSS…ANAIPLAASA (87 aa)). Over residues 8 to 23 (SSSSTTTTTLKTPFTS) the composition is skewed to low complexity. 2 disulfide bridges follow: Cys98-Cys114 and Cys113-Cys182. Cu cation is bound by residues His181, His199, His208, His329, His333, and His371. The 2'-(S-cysteinyl)-histidine (Cys-His) cross-link spans 185 to 199 (CNGAYIIGGKELQVH).

The protein belongs to the tyrosinase family. The cofactor is Cu(2+).

It is found in the plastid. It localises to the chloroplast thylakoid lumen. The catalysed reaction is 2 catechol + O2 = 2 1,2-benzoquinone + 2 H2O. In terms of biological role, catalyzes the oxidation of mono- and o-diphenols to o-diquinones. The protein is Polyphenol oxidase B, chloroplastic of Solanum lycopersicum (Tomato).